Here is a 423-residue protein sequence, read N- to C-terminus: Calcium up-regulated protein A (423 aa).

Residues 1-19 show a composition bias toward basic and acidic residues; that stretch reads MINIEDISKSSNESEEKQL. Positions 1–27 are disordered; sequence MINIEDISKSSNESEEKQLKSTSTSSK. Ricin B-type lectin domains follow at residues 27–147 and 118–251; these read KPKY…WTTF and QGNG…WGIN.

It belongs to the cup family.

It is found in the cytoplasm. Its subcellular location is the membrane. Its function is as follows. May play an important role in stabilizing and/or regulating the cell membrane during Ca(2+) stress or certain stages of development. This is Calcium up-regulated protein A (cupA) from Dictyostelium discoideum (Social amoeba).